The sequence spans 378 residues: UPF0754 membrane protein BCQ_0944 (378 aa).

Transmembrane regions (helical) follow at residues 1–21 (MNIW…GGFT) and 357–377 (YLGA…LLFL).

Belongs to the UPF0754 family.

The protein resides in the cell membrane. The polypeptide is UPF0754 membrane protein BCQ_0944 (Bacillus cereus (strain Q1)).